A 445-amino-acid polypeptide reads, in one-letter code: Glutamyl-tRNA(Gln) amidotransferase subunit D (445 aa).

Residues Ser-93 to Asn-425 enclose the Asparaginase/glutaminase domain. Residues Thr-103, Thr-179, Asp-180, and Lys-258 contribute to the active site.

Belongs to the asparaginase 1 family. GatD subfamily. In terms of assembly, heterodimer of GatD and GatE.

It catalyses the reaction L-glutamyl-tRNA(Gln) + L-glutamine + ATP + H2O = L-glutaminyl-tRNA(Gln) + L-glutamate + ADP + phosphate + H(+). In terms of biological role, allows the formation of correctly charged Gln-tRNA(Gln) through the transamidation of misacylated Glu-tRNA(Gln) in organisms which lack glutaminyl-tRNA synthetase. The reaction takes place in the presence of glutamine and ATP through an activated gamma-phospho-Glu-tRNA(Gln). The GatDE system is specific for glutamate and does not act on aspartate. The sequence is that of Glutamyl-tRNA(Gln) amidotransferase subunit D from Saccharolobus islandicus (strain L.S.2.15 / Lassen #1) (Sulfolobus islandicus).